Consider the following 179-residue polypeptide: Large ribosomal subunit protein uL6 (179 aa).

This sequence belongs to the universal ribosomal protein uL6 family. As to quaternary structure, part of the 50S ribosomal subunit.

This protein binds to the 23S rRNA, and is important in its secondary structure. It is located near the subunit interface in the base of the L7/L12 stalk, and near the tRNA binding site of the peptidyltransferase center. This chain is Large ribosomal subunit protein uL6, found in Nocardioides sp. (strain ATCC BAA-499 / JS614).